The following is a 148-amino-acid chain: uncharacterized protein (148 aa).

The 62-residue stretch at 4 to 65 (LDRVDMQLVK…IPDIDKLGYM (62 aa)) folds into the HTH asnC-type domain. A DNA-binding region (H-T-H motif) is located at residues 23–42 (YRELADILNTTRQRIARRID).

This is an uncharacterized protein from Pyrococcus horikoshii (strain ATCC 700860 / DSM 12428 / JCM 9974 / NBRC 100139 / OT-3).